The primary structure comprises 481 residues: Cis-aconitate decarboxylase (481 aa).

A disordered region spans residues 462-481 (SPPEVASNSPACNNSITNLS). Polar residues predominate over residues 467–481 (ASNSPACNNSITNLS).

It belongs to the PrpD family. In terms of assembly, homodimer. As to expression, expressed in LPS-tolerized macrophages (at protein level). Expressed in peripheral blood mononuclear cells (PBMCs), microglia and macrophage cells.

Its subcellular location is the mitochondrion. It catalyses the reaction cis-aconitate + H(+) = itaconate + CO2. Cis-aconitate decarboxylase that catalyzes production of itaconate and is involved in the inhibition of the inflammatory response. Acts as a negative regulator of the Toll-like receptors (TLRs)-mediated inflammatory innate response by stimulating the tumor necrosis factor alpha-induced protein TNFAIP3 expression via reactive oxygen species (ROS) in LPS-tolerized macrophages. Involved in antimicrobial response of innate immune cells; ACOD1-mediated itaconic acid production contributes to the antimicrobial activity of macrophages by generating itaconate, leading to alkylation of proteins, such as TFEB. Involved in antiviral response following infection by flavivirus in neurons: ACOD1-mediated itaconate production inhibits the activity of succinate dehydrogenase, generating a metabolic state in neurons that suppresses replication of viral genomes. Plays a role in the embryo implantation. The protein is Cis-aconitate decarboxylase of Homo sapiens (Human).